The sequence spans 450 residues: Dol-P-Glc:Glc(2)Man(9)GlcNAc(2)-PP-Dol alpha-1,2-glucosyltransferase (450 aa).

Residues 12 to 32 (ISIISKYVAIVIFLIFVIIMF) traverse the membrane as a helical segment. N-linked (GlcNAc...) asparagine glycosylation is present at Asn-34. The next 4 membrane-spanning stretches (helical) occupy residues 158–178 (YFLF…LGLI), 190–210 (ALVG…IAFI), 243–263 (LLGY…NGGI), and 273–293 (IELH…FTIP). Asn-297 carries N-linked (GlcNAc...) asparagine glycosylation. 4 helical membrane-spanning segments follow: residues 312-332 (IILN…FTIV), 357-377 (LKPL…SSLI), 384-404 (FIGI…SPLF), and 429-449 (FIWL…KGII).

The protein belongs to the ALG10 glucosyltransferase family.

It is found in the endoplasmic reticulum membrane. It catalyses the reaction an alpha-D-Glc-(1-&gt;3)-alpha-D-Glc-(1-&gt;3)-alpha-D-Man-(1-&gt;2)-alpha-D-Man-(1-&gt;2)-alpha-D-Man-(1-&gt;3)-[alpha-D-Man-(1-&gt;2)-alpha-D-Man-(1-&gt;3)-[alpha-D-Man-(1-&gt;2)-alpha-D-Man-(1-&gt;6)]-alpha-D-Man-(1-&gt;6)]-beta-D-Man-(1-&gt;4)-beta-D-GlcNAc-(1-&gt;4)-alpha-D-GlcNAc-diphospho-di-trans,poly-cis-dolichol + a di-trans,poly-cis-dolichyl beta-D-glucosyl phosphate = a alpha-D-Glc-(1-&gt;2)-alpha-D-Glc-(1-&gt;3)-alpha-D-Glc-(1-&gt;3)-alpha-D-Man-(1-&gt;2)-alpha-D-Man-(1-&gt;2)-alpha-D-Man-(1-&gt;3)-[alpha-D-Man-(1-&gt;2)-alpha-D-Man-(1-&gt;3)-[alpha-D-Man-(1-&gt;2)-alpha-D-Man-(1-&gt;6)]-alpha-D-Man-(1-&gt;6)]-beta-D-Man-(1-&gt;4)-beta-D-GlcNAc-(1-&gt;4)-alpha-D-GlcNAc-diphospho-di-trans,poly-cis-dolichol + a di-trans,poly-cis-dolichyl phosphate + H(+). Its pathway is protein modification; protein glycosylation. In terms of biological role, dol-P-Glc:Glc(2)Man(9)GlcNAc(2)-PP-Dol alpha-1,2-glucosyltransferase that operates in the biosynthetic pathway of dolichol-linked oligosaccharides, the glycan precursors employed in protein asparagine (N)-glycosylation. The assembly of dolichol-linked oligosaccharides begins on the cytosolic side of the endoplasmic reticulum membrane and finishes in its lumen. The sequential addition of sugars to dolichol pyrophosphate produces dolichol-linked oligosaccharides containing fourteen sugars, including two GlcNAcs, nine mannoses and three glucoses. Once assembled, the oligosaccharide is transferred from the lipid to nascent proteins by oligosaccharyltransferases. In the lumen of the endoplasmic reticulum, adds the third and last glucose residue from dolichyl phosphate glucose (Dol-P-Glc) onto the lipid-linked oligosaccharide intermediate Glc(2)Man(9)GlcNAc(2)-PP-Dol to produce Glc(3)Man(9)GlcNAc(2)-PP-Dol. The protein is Dol-P-Glc:Glc(2)Man(9)GlcNAc(2)-PP-Dol alpha-1,2-glucosyltransferase (DIE2) of Candida albicans (strain SC5314 / ATCC MYA-2876) (Yeast).